The primary structure comprises 134 residues: Interleukin-5 (134 aa).

Residues 1 to 19 (MRMLLHLSLLALGAAYVYA) form the signal peptide. The O-linked (GalNAc...) threonine glycan is linked to Thr22. Asn47 and Asn90 each carry an N-linked (GlcNAc...) asparagine glycan.

It belongs to the IL-5 family. In terms of assembly, homodimer; disulfide-linked. Interacts with IL5RA. Interacts with CSF2RB.

It localises to the secreted. Homodimeric cytokine expressed predominantly by T-lymphocytes and NK cells that plays an important role in the survival, differentiation, and chemotaxis of eosinophils. Also acts on activated and resting B-cells to induce immunoglobulin production, growth, and differentiation. Mechanistically, exerts its biological effects through a receptor composed of IL5RA subunit and the cytokine receptor common subunit beta/CSF2RB. Binding to the receptor leads to activation of various kinases including LYN, SYK and JAK2 and thereby propagates signals through the RAS-MAPK and JAK-STAT5 pathways respectively. The protein is Interleukin-5 (IL5) of Macaca mulatta (Rhesus macaque).